The sequence spans 284 residues: Phosphatidylglycerol--prolipoprotein diacylglyceryl transferase (284 aa).

The next 7 helical transmembrane spans lie at 14 to 34 (IAFS…ACAI), 62 to 82 (YFLW…ILIY), 106 to 126 (FVGI…IASY), 136 to 156 (LLIY…FGRI), 190 to 210 (PSQL…VLWA), 218 to 238 (GLLI…AEFY), and 252 to 272 (LSMG…ILLY). Arginine 155 contacts a 1,2-diacyl-sn-glycero-3-phospho-(1'-sn-glycerol).

Belongs to the Lgt family.

It localises to the cell inner membrane. The enzyme catalyses L-cysteinyl-[prolipoprotein] + a 1,2-diacyl-sn-glycero-3-phospho-(1'-sn-glycerol) = an S-1,2-diacyl-sn-glyceryl-L-cysteinyl-[prolipoprotein] + sn-glycerol 1-phosphate + H(+). It functions in the pathway protein modification; lipoprotein biosynthesis (diacylglyceryl transfer). Functionally, catalyzes the transfer of the diacylglyceryl group from phosphatidylglycerol to the sulfhydryl group of the N-terminal cysteine of a prolipoprotein, the first step in the formation of mature lipoproteins. This Helicobacter pylori (strain Shi470) protein is Phosphatidylglycerol--prolipoprotein diacylglyceryl transferase.